Reading from the N-terminus, the 474-residue chain is Magnesium transporter MRS2-A, chloroplastic (474 aa).

The N-terminal 55 residues, 1–55 (MASVSSSPSYSSQAAVLLLLHQPPHQHGHGGACLRYRGSQSQGRGNAVATSLGLS), are a transit peptide targeting the chloroplast. The segment at 79-129 (GKDGRAVTKDEEEEAAAAAVEEEGEVEVRREEDKPGDDGSREAAARGSGSG) is disordered. Residues 88–103 (DEEEEAAAAAVEEEGE) are compositionally biased toward acidic residues. Residues 104–122 (VEVRREEDKPGDDGSREAA) show a composition bias toward basic and acidic residues. 2 consecutive transmembrane segments (helical) span residues 412-432 (LLLQ…GIFG) and 444-464 (WAFW…FFIM). Residues 432–434 (GMN) carry the Required for magnesium transport activity motif.

The protein belongs to the CorA metal ion transporter (MIT) (TC 1.A.35.5) family.

The protein localises to the plastid. The protein resides in the chloroplast membrane. Magnesium transporter that may mediate the influx of magnesium in chloroplast. The polypeptide is Magnesium transporter MRS2-A, chloroplastic (MRS2-A) (Oryza sativa subsp. japonica (Rice)).